The following is a 334-amino-acid chain: Nucleoid-associated protein YPN_2714 (334 aa).

Belongs to the YejK family.

The protein resides in the cytoplasm. It localises to the nucleoid. This chain is Nucleoid-associated protein YPN_2714, found in Yersinia pestis bv. Antiqua (strain Nepal516).